Consider the following 434-residue polypeptide: MRVVILGSGVVGVTSAWYLAKEGHDVTVIDRQDGPAQETSAGNAGQISPGYAAPWAAPGVPLKAIKWMFQRHAPLAIRLDGSSLQLRWMWQMLRNCDTSHYMVNKSRMVRLAEYSRDCLKDLRAATGIQYEGRQGGTLQLFRTEQQFDNAAKDIAVLDDAGVPYSLLTAEQLATVEPALAKVAHKLTGGLRLPNDETGDCKLFTERLAKMAEQAGVKFIFNRSVDKLLVEGDQIAGVLCGDDIIKADAYVVAFGAYSTALLAGLVSIPVYPLKGYSLTIPITDPASAPFSTVLDETYKIAITRFDDRIRVGGMAEIVGFNTQLAPARRETLEMVVRDLYPHGGDISQAVFWSGLRPMTPDGTPIVGRTPLKNLYLNTGHGTLGWTMACGSGQLLADIIQGRRPAIVADDLSVARYRTGFQPLNIAPLHDIHPIR.

3–17 (VVILGSGVVGVTSAW) serves as a coordination point for FAD.

Belongs to the DadA oxidoreductase family. Requires FAD as cofactor.

It carries out the reaction a D-alpha-amino acid + A + H2O = a 2-oxocarboxylate + AH2 + NH4(+). It functions in the pathway amino-acid degradation; D-alanine degradation; NH(3) and pyruvate from D-alanine: step 1/1. Functionally, oxidative deamination of D-amino acids. This Yersinia pseudotuberculosis serotype O:3 (strain YPIII) protein is D-amino acid dehydrogenase.